Here is a 375-residue protein sequence, read N- to C-terminus: MYSRRYVACGLLCLLVIAIDQGHGQEHKPCTTPNGTAGRCVRVRECGYVLDLLRKDLFAHSDTVHLEGLQCGTRPDGGALVCCPAFVNEPNCGPSVFGVRIIGGNDTELGEFPWMALLRFQARNRKIHGNCGASLVSKRFVLSAAHCFTAAKSKGWKIHSVRVAEWNFMNHRGSKDCKQVKGYDVPICRKDYDVARFVQHPEYRVNAGVHVNDIVLIELAADVEYNVFVAPICLPVSNDTAQLPWGSSDDPEIEYTAAGWGSTESGKESTGMSYQLKQINLRAFNKERCKKLFQVPSGVGVGLGHICAGGIRDEDTCHGDSGGPLMEAVGGVWYLAGITSFGWPRCGRDGVPGVYTNISHYMGWLEREMFRGILA.

Positions 1 to 24 are cleaved as a signal peptide; sequence MYSRRYVACGLLCLLVIAIDQGHG. A Clip domain is found at 29-83; the sequence is PCTTPNGTAGRCVRVRECGYVLDLLRKDLFAHSDTVHLEGLQCGTRPDGGALVCC. Disulfide bonds link cysteine 30–cysteine 82, cysteine 40–cysteine 71, and cysteine 46–cysteine 83. The N-linked (GlcNAc...) asparagine glycan is linked to asparagine 34. A Peptidase S1 domain is found at 101 to 370; that stretch reads IIGGNDTELG…YMGWLEREMF (270 aa). N-linked (GlcNAc...) asparagine glycosylation is present at asparagine 105. Residues cysteine 131 and cysteine 147 are joined by a disulfide bond. Catalysis depends on charge relay system residues histidine 146 and aspartate 213. The N-linked (GlcNAc...) asparagine glycan is linked to asparagine 238. Disulfide bonds link cysteine 289-cysteine 307 and cysteine 317-cysteine 346. The Charge relay system role is filled by serine 321. N-linked (GlcNAc...) asparagine glycosylation occurs at asparagine 357.

The protein belongs to the peptidase S1 family. CLIP subfamily. Post-translationally, N-glycosylated. In terms of processing, proteolytically cleaved. In terms of tissue distribution, expressed by a subpopulation of hemocytes.

It is found in the secreted. Functionally, serine protease. Plays a role in innate immunity against infections by parasite P.berghei and by Gram-negative bacteria such as E.coli. In response to P.berghei infection, contributes to the clearing of parasite ookinetes independent of melanization, an innate immune response which consists in the deposition of melanin pigments on invading pathogens and parasites. May play a role in non-septic wound healing. This chain is CLIP domain-containing serine protease B14, found in Anopheles gambiae (African malaria mosquito).